Here is a 658-residue protein sequence, read N- to C-terminus: UvrABC system protein B (658 aa).

A Helicase ATP-binding domain is found at 26–413 (EGINSGKKKQ…SPEVIEQIIR (388 aa)). 39–46 (GATGTGKT) is an ATP binding site. The Beta-hairpin signature appears at 92–115 (YYDYYQPEAYVPQTDTFIEKDAQI). The 167-residue stretch at 430-596 (QIDDLLGEIQ…TIQKGVRDVI (167 aa)) folds into the Helicase C-terminal domain. The region spanning 622-657 (EKTIAKMEAEMKEAAKALDFERAAELRDLLLELKAE) is the UVR domain.

Belongs to the UvrB family. As to quaternary structure, forms a heterotetramer with UvrA during the search for lesions. Interacts with UvrC in an incision complex.

The protein localises to the cytoplasm. Its function is as follows. The UvrABC repair system catalyzes the recognition and processing of DNA lesions. A damage recognition complex composed of 2 UvrA and 2 UvrB subunits scans DNA for abnormalities. Upon binding of the UvrA(2)B(2) complex to a putative damaged site, the DNA wraps around one UvrB monomer. DNA wrap is dependent on ATP binding by UvrB and probably causes local melting of the DNA helix, facilitating insertion of UvrB beta-hairpin between the DNA strands. Then UvrB probes one DNA strand for the presence of a lesion. If a lesion is found the UvrA subunits dissociate and the UvrB-DNA preincision complex is formed. This complex is subsequently bound by UvrC and the second UvrB is released. If no lesion is found, the DNA wraps around the other UvrB subunit that will check the other stand for damage. The sequence is that of UvrABC system protein B from Bacillus cereus (strain ATCC 14579 / DSM 31 / CCUG 7414 / JCM 2152 / NBRC 15305 / NCIMB 9373 / NCTC 2599 / NRRL B-3711).